The sequence spans 944 residues: snRNA-activating protein complex subunit 4 homolog (944 aa).

Positions 1–22 (MSDLVMFEPGASTSTDVPTNTD) are disordered. Residues 11 to 22 (ASTSTDVPTNTD) show a composition bias toward polar residues. The 68-residue stretch at 177–244 (TSNFDRRQWT…AVKSKWYNEL (68 aa)) folds into the Myb-like 1 domain. The HTH myb-type 1 domain maps to 245–301 (NPKWNKEHWSNEEVEKLKYLRESPKFVSWPMLALNLGTNRTSYQCMEKYKTEVSQHS). A DNA-binding region (H-T-H motif) is located at residues 273-297 (WPMLALNLGTNRTSYQCMEKYKTEV). Residues 304 to 350 (WSQDEDTKLIALTKITSINGHIQWDKVAQCMPGRTRQQVRTRFSHTL) enclose the Myb-like 2 domain. 2 consecutive HTH myb-type domains span residues 351-406 (DASV…NRSA) and 407-459 (HVNE…AAKL). 2 DNA-binding regions (H-T-H motif) span residues 379–402 (WAKVAQAVQNRNDSQCRERWTNVL) and 432–455 (WAKCQMLLPKKTSRQLRRRYLQLI). Residues 911–921 (ARPARPPRSSA) are compositionally biased toward low complexity. Positions 911–935 (ARPARPPRSSAGTPTPSHVSIDTES) are disordered. Positions 922 to 935 (GTPTPSHVSIDTES) are enriched in polar residues.

In terms of tissue distribution, broadly expressed in all tissues, including head, vulva and tail.

The protein resides in the nucleus. Binds to the promoter regions of RNA polymerase II and III small-nuclear RNA genes, type 3 RNA polymerase III non-coding RNA genes, small nucleolar RNAs and transfer RNA genes. Required for expression of mature 21U-RNAs. The chain is snRNA-activating protein complex subunit 4 homolog from Caenorhabditis elegans.